We begin with the raw amino-acid sequence, 129 residues long: Sulfurtransferase TusD (129 aa).

Catalysis depends on Cys79, which acts as the Cysteine persulfide intermediate.

It belongs to the DsrE/TusD family. In terms of assembly, heterohexamer, formed by a dimer of trimers. The hexameric TusBCD complex contains 2 copies each of TusB, TusC and TusD. The TusBCD complex interacts with TusE.

It is found in the cytoplasm. Functionally, part of a sulfur-relay system required for 2-thiolation of 5-methylaminomethyl-2-thiouridine (mnm(5)s(2)U) at tRNA wobble positions. Accepts sulfur from TusA and transfers it in turn to TusE. The chain is Sulfurtransferase TusD from Serratia proteamaculans (strain 568).